The following is a 230-amino-acid chain: Uracil-DNA glycosylase (230 aa).

The active-site Proton acceptor is the D70.

This sequence belongs to the uracil-DNA glycosylase (UDG) superfamily. UNG family.

The protein localises to the cytoplasm. The catalysed reaction is Hydrolyzes single-stranded DNA or mismatched double-stranded DNA and polynucleotides, releasing free uracil.. Its function is as follows. Excises uracil residues from the DNA which can arise as a result of misincorporation of dUMP residues by DNA polymerase or due to deamination of cytosine. This chain is Uracil-DNA glycosylase, found in Pseudomonas putida (strain W619).